A 94-amino-acid polypeptide reads, in one-letter code: Long neurotoxin LNTX1 (94 aa).

The N-terminal stretch at 1–21 (MKILLLTLVVVTIMCLDLGYT) is a signal peptide. Disulfide bonds link cysteine 24-cysteine 43, cysteine 36-cysteine 64, cysteine 49-cysteine 53, cysteine 68-cysteine 79, and cysteine 80-cysteine 85.

Belongs to the three-finger toxin family. Long-chain subfamily. Type II alpha-neurotoxin sub-subfamily. Monomer. In terms of tissue distribution, expressed by the venom gland.

It localises to the secreted. Its function is as follows. Binds with high affinity to muscular (alpha-1/CHRNA1) and neuronal (alpha-7/CHRNA7) nicotinic acetylcholine receptor (nAChR) and inhibits acetylcholine from binding to the receptor, thereby impairing neuromuscular and neuronal transmission. Recombinant LNTX1 leads to a functional block of the muscle-type acetylcholine receptors. Has a cytotoxic activity. This Ophiophagus hannah (King cobra) protein is Long neurotoxin LNTX1.